We begin with the raw amino-acid sequence, 198 residues long: N-acetyltransferase 9-like protein (198 aa).

The region spanning 34 to 178 (EEIRRLTGSE…KEITMELPGE (145 aa)) is the N-acetyltransferase domain.

The protein belongs to the acetyltransferase family. GNAT subfamily.

The polypeptide is N-acetyltransferase 9-like protein (Caenorhabditis briggsae).